A 366-amino-acid polypeptide reads, in one-letter code: Galactoside alpha-(1,2)-fucosyltransferase 1 (366 aa).

Residues 1 to 8 (MWPLSHRH) lie on the Cytoplasmic side of the membrane. A helical; Signal-anchor for type II membrane protein membrane pass occupies residues 9 to 25 (LCLAFLLVCVLSAISFF). The Lumenal segment spans residues 26-366 (LHIHQDSIRH…LSPLWTLAEP (341 aa)). Residues asparagine 66, asparagine 302, and asparagine 328 are each glycosylated (N-linked (GlcNAc...) asparagine).

This sequence belongs to the glycosyltransferase 11 family.

It is found in the golgi apparatus. Its subcellular location is the golgi stack membrane. It catalyses the reaction a beta-D-galactosyl-(1-&gt;4)-N-acetyl-beta-D-glucosaminyl derivative + GDP-beta-L-fucose = an alpha-L-Fuc-(1-&gt;2)-beta-D-Gal-(1-&gt;4)-beta-D-GlcNAc derivative + GDP + H(+). The enzyme catalyses a ganglioside GA1 + GDP-beta-L-fucose = a ganglioside Fuc-GA1 + GDP + H(+). The catalysed reaction is a beta-D-Gal-(1-&gt;3)-beta-D-GlcNAc-(1-&gt;3)-beta-D-Gal-(1-&gt;4)-beta-D-Glc-(1&lt;-&gt;1')-Cer(d18:1(4E)) + GDP-beta-L-fucose = alpha-L-fucosyl-(1-&gt;2)- beta-D-galactosyl-(1-&gt;3)-N-acetyl-beta-D-glucosaminyl-(1-&gt;3)-beta-D-galactosyl-(1-&gt;4)-beta-D-glucosyl-(1&lt;-&gt;1')-N-acylsphing-4-enine + GDP + H(+). It carries out the reaction a neolactoside nLc4Cer(d18:1(4E)) + GDP-beta-L-fucose = a neolactoside IV(2)-alpha-Fuc-nLc4Cer(d18:1(4E)) + GDP + H(+). It catalyses the reaction a ganglioside GM1 + GDP-beta-L-fucose = a ganglioside Fuc-GM1 + GDP + H(+). The enzyme catalyses beta-D-galactosyl-(1-&gt;3)-N-acetyl-D-galactosamine + GDP-beta-L-fucose = alpha-L-fucosyl-(1-&gt;2)-beta-D-galactosyl-(1-&gt;3)-N-acetyl-D-galactosamine + GDP + H(+). Its pathway is protein modification; protein glycosylation. Its function is as follows. Catalyzes the transfer of L-fucose, from a guanosine diphosphate-beta-L-fucose, to the terminal galactose residue of glycoconjugates through an alpha(1,2) linkage leading to H antigen synthesis that is an intermediate substrate in the synthesis of ABO blood group antigens. H antigen is essential for maturation of the glomerular layer of the main olfactory bulb, in cell migration and early cell-cell contacts during tumor associated angiogenesis. Preferentially fucosylates soluble lactose and to a lesser extent fucosylates glycolipids gangliosides GA1 and GM1a. The protein is Galactoside alpha-(1,2)-fucosyltransferase 1 of Aotus nancymaae (Ma's night monkey).